We begin with the raw amino-acid sequence, 900 residues long: Trehalose-phosphatase (900 aa).

Disordered stretches follow at residues 76-109 and 874-900; these read SRLFNSKNRDKSENGEKGENDLHAKEEREKEEDP and VKHSDSSIRSEQASARYAMKRQQSYKN. Basic and acidic residues predominate over residues 82 to 108; sequence KNRDKSENGEKGENDLHAKEEREKEED.

In the C-terminal section; belongs to the trehalose phosphatase family. It in the N-terminal section; belongs to the glycosyltransferase 20 family. Mg(2+) serves as cofactor.

It catalyses the reaction alpha,alpha-trehalose 6-phosphate + H2O = alpha,alpha-trehalose + phosphate. It participates in carbohydrate biosynthesis. Phosphatase catalytic subunit of the trehalose synthase complex that catalyzes the production of trehalose from glucose-6-phosphate and UDP-alpha-D-glucose in a two step process. The chain is Trehalose-phosphatase from Zygosaccharomyces rouxii.